Consider the following 585-residue polypeptide: Type IV pilus assembly ATPase TfpB (585 aa).

An ATP-binding site is contributed by 346 to 351 (GSGKTT). Positions 476, 479, 511, and 514 each coordinate Zn(2+).

Belongs to the GSP E family.

It localises to the cytoplasm. Its function is as follows. ATPase component of the type IV pilus (T4P). Acts as a molecular motor to provide the energy that is required for biogenesis of the pilus and the extrusion of substrates generated in the cytoplasm. TfpB is required for optimal T4P extension and, consequently, efficient natural transformation. May play a role in initiating T4P extension. The polypeptide is Type IV pilus assembly ATPase TfpB (Acinetobacter baylyi (strain ATCC 33305 / BD413 / ADP1)).